Here is a 337-residue protein sequence, read N- to C-terminus: MIPWLLTACIYPCVIGPDFWGLLHGDWRMCTAGQMQSPVNIDPSQLLYDPHLMPINIEGNIVEAVFENTGQLPVVTVKDLPNRPTINITGGPTMPYRYKLHQISVHFGRADEGEKGSEHTVDRVRFPAEIQLLAYNSALYPNFSVAMTSPRGLLAVSVIVDIGKTTSVELRRLTVASQSINYKGQTTNLTDFQPSALLPKTSHYVTYEGSLTFPGCHETVTWVILNNPIYITNDDLQIWNEMQKTETKQPEPSYMTPAYRPLKSLNGRLVRTNINVGSKQSTVSSSCPSNVYVEMGYQANPGRNKRNDSVSRRYVPTSEVFEIDSIRPDDVSKAGSF.

Residues 1 to 16 (MIPWLLTACIYPCVIG) form the signal peptide. In terms of domain architecture, Alpha-carbonic anhydrase spans 17 to 274 (PDFWGLLHGD…LNGRLVRTNI (258 aa)). Tyrosine 140 is a catalytic residue. Asparagine 188 carries N-linked (GlcNAc...) asparagine glycosylation. Position 212 to 213 (212 to 213 (TF)) interacts with substrate.

The protein belongs to the alpha-carbonic anhydrase family.

The protein resides in the secreted. This is Putative carbonic anhydrase-like protein 2 (cah-2) from Caenorhabditis elegans.